The primary structure comprises 88 residues: Protein K3 (88 aa).

In terms of domain architecture, S1 motif spans 8–82; it reads LPNAGDVIKG…TKGYIDVNYK (75 aa). 2 binding to host EIF2AK2/PKR regions span residues 43 to 53 and 74 to 79; these read SVKMHMDRYVE and KGYIDV.

This sequence belongs to the orthopoxvirus OPG041 family. As to quaternary structure, interacts with host EIF2AK2/PKR kinase.

Functionally, viral mimic of eIF-2-alpha that acts as a pseudosubstrate for EIF2AK2/PKR kinase. Inhibits therefore eIF-2-alpha phosphorylation by host EIF2AK2/PKR kinase and prevents protein synthesis shutoff. Determinant of host species specificity. The chain is Protein K3 (OPG041) from Homo sapiens (Human).